We begin with the raw amino-acid sequence, 302 residues long: Urease accessory protein UreD 2 (302 aa).

This sequence belongs to the UreD family. UreD, UreF and UreG form a complex that acts as a GTP-hydrolysis-dependent molecular chaperone, activating the urease apoprotein by helping to assemble the nickel containing metallocenter of UreC. The UreE protein probably delivers the nickel.

It is found in the cytoplasm. In terms of biological role, required for maturation of urease via the functional incorporation of the urease nickel metallocenter. In Brucella melitensis biotype 1 (strain ATCC 23456 / CCUG 17765 / NCTC 10094 / 16M), this protein is Urease accessory protein UreD 2.